Here is a 476-residue protein sequence, read N- to C-terminus: Cytochrome c oxidase subunit 1 (476 aa).

Residues 19–39 (LYYLWFSFLFGIYGFLLSVIL) form a helical membrane-spanning segment. Ca(2+) is bound at residue Glu42. A run of 8 helical transmembrane segments spans residues 61-81 (MIFT…GLFG), 105-125 (ISLL…AAEF), 144-164 (LSPV…IASI), 194-214 (LIIT…GVLM), 240-260 (LLWF…FGII), 278-298 (MILA…HHMY), 309-329 (FFTS…FNWL), and 345-365 (LLSL…VILG). His66 contacts Fe(II)-heme a. Residue His246 coordinates Cu cation. Residues 246–250 (HPEVY) constitute a cross-link (1'-histidyl-3'-tyrosine (His-Tyr)). Residue Tyr250 participates in O2 binding. Residues His295 and His296 each contribute to the Cu cation site. Positions 374 and 375 each coordinate Mg(2+). 2 consecutive transmembrane segments (helical) span residues 379–399 (VIAH…FTSV) and 415–435 (TIIV…FLPM). Position 382 (His382) interacts with heme a3. A Fe(II)-heme a-binding site is contributed by His384. Pro448 contacts Ca(2+). A helical membrane pass occupies residues 455-475 (NGWNMICSIGSTMTLFGLLIF).

This sequence belongs to the heme-copper respiratory oxidase family. As to quaternary structure, component of the cytochrome c oxidase (complex IV, CIV), a multisubunit enzyme composed of a catalytic core of 3 subunits and several supernumerary subunits. The complex exists as a monomer or a dimer and forms supercomplexes (SCs) in the inner mitochondrial membrane with ubiquinol-cytochrome c oxidoreductase (cytochrome b-c1 complex, complex III, CIII). Heme is required as a cofactor. It depends on Cu cation as a cofactor.

Its subcellular location is the mitochondrion inner membrane. The catalysed reaction is 4 Fe(II)-[cytochrome c] + O2 + 8 H(+)(in) = 4 Fe(III)-[cytochrome c] + 2 H2O + 4 H(+)(out). The protein operates within energy metabolism; oxidative phosphorylation. Its function is as follows. Component of the cytochrome c oxidase, the last enzyme in the mitochondrial electron transport chain which drives oxidative phosphorylation. The respiratory chain contains 3 multisubunit complexes succinate dehydrogenase (complex II, CII), ubiquinol-cytochrome c oxidoreductase (cytochrome b-c1 complex, complex III, CIII) and cytochrome c oxidase (complex IV, CIV), that cooperate to transfer electrons derived from NADH and succinate to molecular oxygen, creating an electrochemical gradient over the inner membrane that drives transmembrane transport and the ATP synthase. Cytochrome c oxidase is the component of the respiratory chain that catalyzes the reduction of oxygen to water. Electrons originating from reduced cytochrome c in the intermembrane space (IMS) are transferred via the dinuclear copper A center (CU(A)) of subunit 2 and heme A of subunit 1 to the active site in subunit 1, a binuclear center (BNC) formed by heme A3 and copper B (CU(B)). The BNC reduces molecular oxygen to 2 water molecules using 4 electrons from cytochrome c in the IMS and 4 protons from the mitochondrial matrix. This Plasmodium chabaudi protein is Cytochrome c oxidase subunit 1 (COI).